A 1126-amino-acid polypeptide reads, in one-letter code: MPKRTDIKSVMVIGSGPIVIGQAAEFDYSGTQACRVLREEGIRVILVNSNPATIMTDPEMADATYIEPISTPILEQIIAKERPDALLPTLGGQTALNAAMALGEAGVLKKYNVELIGASLDAIDRGEDRELFKKVVEEAGAESARSDIAHSLEEVDKIAEKFGYPLVVRPSFTMGGLGSGIAHDEDELHRIAGAGIHYSPTDHVLIEESIEGWKEYELELMRDKKDNVLVVCPIQNVDPVGVHTGDSITVAPVFTLTDREYQKLRDIGIAIIRGVGVDTGGCNIQFAVNPDTGRIIVIEMNPRVSRSSALASKATGFPIAKIATKLALGYTLDEIQNDITQSTPASFEPTIDYVVTKVPRFAFEKFPGADPTLTTSMKSVGEAMALAGNFQESLGKAMRSIDKRHMGFNWDGDKPSEDEVSQLLDAIKVPTEHRYLQIQRALWGGATEEQIFAATKIDPWFIRQFALINETALEVKNAEKLTRKLLKKAKLAGLSDLQIAHLRRLGDEGENTIRELRWSYDLRPVFKTVDTCAAEFDAATPYYYSCYADETELRPRDREAVIILGSGPNRIGQGIEFDYTCVHAVQELGKNYDTIMVNCNPETVSTDYDMSDRLYFEPLTFEDVLEIYEAEKKMGPIKGVIVQLGGQTPLSLAARLKAAGVPILGTTPESIDLAENRELFGEVLKKADMNAPRYGTALSLDEAREAAHAIGYPVLVRPSYVLGGRGMEIVYDDAQLRKYVDRALKEAQADTVVSGRLPSPLLIDKFLQDAVEIDVDALFDGEELYIGGIMEHVEEAGVHSGDAACTLPPSTLSDDQIRRLREGTYAIAKGCGVQGLINVQYAFMANTLYVIEANPRASRTVPFASKATGVALAKAAARIMVGETIQQQRDNGLLLPHGDGGDIHRGQQVAVKESVLPFKRFRTPLGKTVDVLLGPEMRSTGEVMGFDRDFPHAFAKSQLAAYEGGLPTSGNVFISVNDTDKRQLPLFAARLVELGFNIWATEGTASVLRRYGIDSKIVDKISVRMDSDPDDPITTYHAEGSVGKNVVQLIEEGAIDLILNTPNSRGSRSDGYAIRSAAIAADLPQFTTMTEFSAVLMAIEAVRNNDYQIMSIQDHSTQLFELESRD.

The tract at residues 1-402 (MPKRTDIKSV…SLGKAMRSID (402 aa)) is carboxyphosphate synthetic domain. ATP contacts are provided by R129, R169, G175, G176, E208, I210, E215, G241, V242, H243, Q285, and E299. The region spanning 133 to 328 (KKVVEEAGAE…IAKIATKLAL (196 aa)) is the ATP-grasp 1 domain. Positions 285, 299, and 301 each coordinate Mg(2+). Q285, E299, and N301 together coordinate Mn(2+). Residues 403 to 551 (KRHMGFNWDG…YYYSCYADET (149 aa)) are oligomerization domain. A carbamoyl phosphate synthetic domain region spans residues 552-962 (ELRPRDREAV…AFAKSQLAAY (411 aa)). The region spanning 681 to 881 (GEVLKKADMN…LAKAAARIMV (201 aa)) is the ATP-grasp 2 domain. ATP is bound by residues R717, K765, L767, E772, G797, V798, H799, S800, Q840, and E852. Q840, E852, and N854 together coordinate Mg(2+). Residues Q840, E852, and N854 each coordinate Mn(2+). The interval 963-1126 (EGGLPTSGNV…TQLFELESRD (164 aa)) is allosteric domain. An MGS-like domain is found at 964–1126 (GGLPTSGNVF…TQLFELESRD (163 aa)).

It belongs to the CarB family. In terms of assembly, composed of two chains; the small (or glutamine) chain promotes the hydrolysis of glutamine to ammonia, which is used by the large (or ammonia) chain to synthesize carbamoyl phosphate. Tetramer of heterodimers (alpha,beta)4. Requires Mg(2+) as cofactor. Mn(2+) serves as cofactor.

It carries out the reaction hydrogencarbonate + L-glutamine + 2 ATP + H2O = carbamoyl phosphate + L-glutamate + 2 ADP + phosphate + 2 H(+). It catalyses the reaction hydrogencarbonate + NH4(+) + 2 ATP = carbamoyl phosphate + 2 ADP + phosphate + 2 H(+). Its pathway is amino-acid biosynthesis; L-arginine biosynthesis; carbamoyl phosphate from bicarbonate: step 1/1. It functions in the pathway pyrimidine metabolism; UMP biosynthesis via de novo pathway; (S)-dihydroorotate from bicarbonate: step 1/3. Large subunit of the glutamine-dependent carbamoyl phosphate synthetase (CPSase). CPSase catalyzes the formation of carbamoyl phosphate from the ammonia moiety of glutamine, carbonate, and phosphate donated by ATP, constituting the first step of 2 biosynthetic pathways, one leading to arginine and/or urea and the other to pyrimidine nucleotides. The large subunit (synthetase) binds the substrates ammonia (free or transferred from glutamine from the small subunit), hydrogencarbonate and ATP and carries out an ATP-coupled ligase reaction, activating hydrogencarbonate by forming carboxy phosphate which reacts with ammonia to form carbamoyl phosphate. The polypeptide is Carbamoyl phosphate synthase large chain (Bifidobacterium adolescentis (strain ATCC 15703 / DSM 20083 / NCTC 11814 / E194a)).